A 632-amino-acid polypeptide reads, in one-letter code: Protein EAP1 (632 aa).

Disordered stretches follow at residues Met-1 to Lys-80, Met-149 to Glu-204, and Lys-248 to Ser-313. 2 stretches are compositionally biased toward polar residues: residues Ser-7–Phe-38 and Val-54–Gly-69. The residue at position 30 (Ser-30) is a Phosphoserine. Phosphoserine occurs at positions 281 and 282. A compositionally biased stretch (basic and acidic residues) spans Asn-288–Ser-298. Residues Ser-327 and Ser-344 each carry the phosphoserine modification. The interval Ser-347 to Ser-378 is disordered. Residues Asn-353–Ser-371 show a composition bias toward low complexity. A Phosphoserine modification is found at Ser-387. 2 disordered regions span residues Gln-429–Pro-541 and Gln-587–Lys-632. Gly-440 to Ser-447 contributes to the ATP binding site. Pro residues predominate over residues Pro-474–Gly-486. Residues Lys-492–Leu-505 are compositionally biased toward basic and acidic residues. 3 stretches are compositionally biased toward polar residues: residues Gln-507 to Asn-516, Phe-590 to Pro-603, and Ile-610 to Leu-621.

Interacts with SMY2, SYH1 and eIF4E.

The protein resides in the cytoplasm. In terms of biological role, can regulate translation through binding to eIF4E. Competes with eIF4G and p20 for binding to eIF4E in vivo and inhibits cap-dependent translation in vitro. Plays a role in cell growth and is implicated in the TOR signaling cascade. Functions independently of eIF4E to maintain genetic stability and to attenuate GCN4 translation upon TOR inactivation. This chain is Protein EAP1 (EAP1), found in Saccharomyces cerevisiae (strain ATCC 204508 / S288c) (Baker's yeast).